The chain runs to 156 residues: Small ribosomal subunit protein uS7 (156 aa).

Belongs to the universal ribosomal protein uS7 family. In terms of assembly, part of the 30S ribosomal subunit. Contacts proteins S9 and S11.

Its function is as follows. One of the primary rRNA binding proteins, it binds directly to 16S rRNA where it nucleates assembly of the head domain of the 30S subunit. Is located at the subunit interface close to the decoding center, probably blocks exit of the E-site tRNA. This chain is Small ribosomal subunit protein uS7, found in Herminiimonas arsenicoxydans.